The primary structure comprises 1571 residues: Neurexin-3 (1571 aa).

The signal sequence occupies residues 1–27; sequence MSFTLHSVFFTLKVSIFLGSLVGLCLG. The Laminin G-like 1 domain occupies 28–202; the sequence is LEFMGLPNQW…SVQLEAEGPC (175 aa). Residues 28-1496 lie on the Extracellular side of the membrane; sequence LEFMGLPNQW…EVIRESSSTT (1469 aa). Residues asparagine 58 and asparagine 105 are each glycosylated (N-linked (GlcNAc...) asparagine). Positions 198-235 constitute an EGF-like 1 domain; that stretch reads AEGPCGERPCENGGICFLLDGHPTCDCSTTGYGGTLCS. Disulfide bonds link cysteine 202–cysteine 213, cysteine 207–cysteine 222, and cysteine 224–cysteine 234. Laminin G-like domains are found at residues 258–440 and 447–639; these read VATF…VFKC and DPIN…KSSC. Ca(2+)-binding residues include aspartate 304, leucine 321, and methionine 374. Disulfide bonds link cysteine 404–cysteine 440, cysteine 610–cysteine 639, cysteine 647–cysteine 658, cysteine 652–cysteine 667, and cysteine 669–cysteine 679. The region spanning 643-680 is the EGF-like 2 domain; the sequence is SAKQCDSYPCKNNAVCKDGWNRFICDCTGTGYWGRTCE. 2 consecutive Laminin G-like domains span residues 685–857 and 871–1046; these read ILSY…IDYC and DPVT…ERGC. Aspartate 732 and leucine 749 together coordinate Ca(2+). Residue asparagine 757 is glycosylated (N-linked (GlcNAc...) asparagine). Arginine 807 contributes to the Ca(2+) binding site. Cystine bridges form between cysteine 1018-cysteine 1046, cysteine 1053-cysteine 1064, cysteine 1058-cysteine 1073, and cysteine 1075-cysteine 1085. The EGF-like 3 domain maps to 1049-1086; sequence PSTTCQEDSCANQGVCMQQWEGFTCDCSMTSYSGNQCN. Residues 1090 to 1290 enclose the Laminin G-like 6 domain; that stretch reads ATYIFGKSGG…NPNIKINGSV (201 aa). Residues aspartate 1142 and isoleucine 1159 each contribute to the Ca(2+) site. N-linked (GlcNAc...) asparagine glycosylation is present at asparagine 1189. Residues isoleucine 1241 and asparagine 1243 each coordinate Ca(2+). N-linked (GlcNAc...) asparagine glycosylation is found at asparagine 1287 and asparagine 1331. The tract at residues 1324-1348 is disordered; the sequence is ATTTTRKNRSTASIQPTSDDLVSSA. The segment covering 1333–1348 has biased composition (polar residues); the sequence is STASIQPTSDDLVSSA. Residue serine 1347 is glycosylated (O-linked (Xyl...) (heparan sulfate) serine). Residues 1497-1517 form a helical membrane-spanning segment; the sequence is GMVVGIVAAAALCILILLYAM. Residues 1518 to 1571 lie on the Cytoplasmic side of the membrane; it reads YKYRNRDEGSYQVDETRNYISNSAQSNGTLMKEKQASSKSGHKKQKNKDKEYYV. The disordered stretch occupies residues 1539–1571; sequence NSAQSNGTLMKEKQASSKSGHKKQKNKDKEYYV.

The protein belongs to the neurexin family. As to quaternary structure, the laminin G-like domain 2 binds to NXPH1. Specific isoforms bind to alpha-dystroglycan. The cytoplasmic C-terminal region binds to CASK. Specific isoforms bind neuroligins NLGN1, NLGN2 and NLGN3. Interacts with CLSTN3. In terms of processing, O-glycosylated; contains heparan sulfate. Heparan sulfate attachment is required for synapse development by mediating interactions with neuroligins. As to expression, brain and arteries (at protein level).

The protein resides in the presynaptic cell membrane. In terms of biological role, neuronal cell surface protein that may be involved in cell recognition and cell adhesion. May mediate intracellular signaling. This is Neurexin-3 (Nrxn3) from Mus musculus (Mouse).